The following is a 250-amino-acid chain: uncharacterized protein (250 aa).

A divalent metal cation contacts are provided by Glu97, Glu99, and Asp128.

This sequence belongs to the FAH family.

This is an uncharacterized protein from Archaeoglobus fulgidus (strain ATCC 49558 / DSM 4304 / JCM 9628 / NBRC 100126 / VC-16).